The sequence spans 257 residues: 3-deoxy-manno-octulosonate cytidylyltransferase (257 aa).

This sequence belongs to the KdsB family.

The protein resides in the cytoplasm. The enzyme catalyses 3-deoxy-alpha-D-manno-oct-2-ulosonate + CTP = CMP-3-deoxy-beta-D-manno-octulosonate + diphosphate. It participates in nucleotide-sugar biosynthesis; CMP-3-deoxy-D-manno-octulosonate biosynthesis; CMP-3-deoxy-D-manno-octulosonate from 3-deoxy-D-manno-octulosonate and CTP: step 1/1. Its pathway is bacterial outer membrane biogenesis; lipopolysaccharide biosynthesis. In terms of biological role, activates KDO (a required 8-carbon sugar) for incorporation into bacterial lipopolysaccharide in Gram-negative bacteria. This chain is 3-deoxy-manno-octulosonate cytidylyltransferase, found in Stenotrophomonas maltophilia (strain R551-3).